Here is a 57-residue protein sequence, read N- to C-terminus: UPF0391 membrane protein HNE_2348 (57 aa).

The next 2 membrane-spanning stretches (helical) occupy residues 4–24 (WALT…GGIA) and 27–47 (AASI…ITFV).

It belongs to the UPF0391 family.

The protein resides in the cell membrane. The protein is UPF0391 membrane protein HNE_2348 of Hyphomonas neptunium (strain ATCC 15444).